We begin with the raw amino-acid sequence, 157 residues long: Protein Smg (157 aa).

Belongs to the Smg family.

This Shigella boydii serotype 18 (strain CDC 3083-94 / BS512) protein is Protein Smg.